Here is a 379-residue protein sequence, read N- to C-terminus: MKNEMLALILAGGQGTRLGKLTQSIAKPAVQFGGRYRIIDFALSNCANSGINNVGVITQYQPLELNTHIGNGSSWGLDGIDSGVTVLQPYSATEGNRWFQGTSHAIYQNIDYIDRINPEYVLILSGDHIYKMNYDDMLQTHKDNLASLTVAVLDVPLKEASRFGIMNTDSNDRIVEFEEKPEHPKSTKASMGIYIFDWKRLRTVLIDGEKNGIDMSDFGKNVIPAYLESGERVYTYNFDGYWKDVGTIESLWEANMEYIGEDNKLHSRDRSWKIYSKNLIAPPNFMTEDANVKDSLVVDGCFVAGNVEHSILSTNVQVKPNAIIKDSFVMSGATIGEGAKINRAIIGEDAVIGDGVVIDGSKEVEVIGYKEVAGVPNED.

Alpha-D-glucose 1-phosphate contacts are provided by residues Gly-164, 179 to 180 (EK), and Ser-190.

The protein belongs to the bacterial/plant glucose-1-phosphate adenylyltransferase family. In terms of assembly, homotetramer.

The enzyme catalyses alpha-D-glucose 1-phosphate + ATP + H(+) = ADP-alpha-D-glucose + diphosphate. It participates in glycan biosynthesis; glycogen biosynthesis. In terms of biological role, involved in the biosynthesis of ADP-glucose, a building block required for the elongation reactions to produce glycogen. Catalyzes the reaction between ATP and alpha-D-glucose 1-phosphate (G1P) to produce pyrophosphate and ADP-Glc. The chain is Glucose-1-phosphate adenylyltransferase from Streptococcus agalactiae serotype Ia (strain ATCC 27591 / A909 / CDC SS700).